A 229-amino-acid polypeptide reads, in one-letter code: DNA repair protein RecO (229 aa).

It belongs to the RecO family.

Functionally, involved in DNA repair and RecF pathway recombination. This is DNA repair protein RecO from Legionella pneumophila (strain Lens).